The sequence spans 236 residues: 2,3,4,5-tetrahydropyridine-2,6-dicarboxylate N-acetyltransferase (236 aa).

Belongs to the transferase hexapeptide repeat family. DapH subfamily.

The catalysed reaction is (S)-2,3,4,5-tetrahydrodipicolinate + acetyl-CoA + H2O = L-2-acetamido-6-oxoheptanedioate + CoA. Its pathway is amino-acid biosynthesis; L-lysine biosynthesis via DAP pathway; LL-2,6-diaminopimelate from (S)-tetrahydrodipicolinate (acetylase route): step 1/3. In terms of biological role, catalyzes the transfer of an acetyl group from acetyl-CoA to tetrahydrodipicolinate. This is 2,3,4,5-tetrahydropyridine-2,6-dicarboxylate N-acetyltransferase from Thermotoga maritima (strain ATCC 43589 / DSM 3109 / JCM 10099 / NBRC 100826 / MSB8).